The chain runs to 266 residues: Hydroxymethylpyrimidine/phosphomethylpyrimidine kinase (266 aa).

Gln43 contacts 4-amino-5-hydroxymethyl-2-methylpyrimidine.

The protein belongs to the ThiD family.

The enzyme catalyses 4-amino-5-hydroxymethyl-2-methylpyrimidine + ATP = 4-amino-2-methyl-5-(phosphooxymethyl)pyrimidine + ADP + H(+). It catalyses the reaction 4-amino-2-methyl-5-(phosphooxymethyl)pyrimidine + ATP = 4-amino-2-methyl-5-(diphosphooxymethyl)pyrimidine + ADP. It participates in cofactor biosynthesis; thiamine diphosphate biosynthesis; 4-amino-2-methyl-5-diphosphomethylpyrimidine from 5-amino-1-(5-phospho-D-ribosyl)imidazole: step 2/3. Its pathway is cofactor biosynthesis; thiamine diphosphate biosynthesis; 4-amino-2-methyl-5-diphosphomethylpyrimidine from 5-amino-1-(5-phospho-D-ribosyl)imidazole: step 3/3. Its function is as follows. Catalyzes the phosphorylation of hydroxymethylpyrimidine phosphate (HMP-P) to HMP-PP, and of HMP to HMP-P. This chain is Hydroxymethylpyrimidine/phosphomethylpyrimidine kinase (thiD), found in Rhizobium meliloti (strain 1021) (Ensifer meliloti).